We begin with the raw amino-acid sequence, 273 residues long: Undecaprenyl-diphosphatase (273 aa).

8 helical membrane-spanning segments follow: residues isoleucine 3–proline 23, alanine 48–phenylalanine 68, methionine 92–isoleucine 112, leucine 116–alanine 136, isoleucine 152–phenylalanine 172, alanine 193–leucine 213, threonine 220–isoleucine 240, and isoleucine 252–tyrosine 272.

The protein belongs to the UppP family.

The protein localises to the cell membrane. It catalyses the reaction di-trans,octa-cis-undecaprenyl diphosphate + H2O = di-trans,octa-cis-undecaprenyl phosphate + phosphate + H(+). Functionally, catalyzes the dephosphorylation of undecaprenyl diphosphate (UPP). Confers resistance to bacitracin. The sequence is that of Undecaprenyl-diphosphatase from Geobacillus sp. (strain WCH70).